Reading from the N-terminus, the 240-residue chain is Protein GrpE (240 aa).

Over residues 1–13 (MTDNQRQSTTDGQ) the composition is skewed to polar residues. The tract at residues 1–89 (MTDNQRQSTT…DAEQKAEEHW (89 aa)) is disordered. Over residues 20-38 (AQATAEAAEQTQATQASAA) the composition is skewed to low complexity. Residues 65–89 (EALRQRVEELEKALADAEQKAEEHW) show a composition bias toward basic and acidic residues.

This sequence belongs to the GrpE family. Homodimer.

The protein localises to the cytoplasm. Functionally, participates actively in the response to hyperosmotic and heat shock by preventing the aggregation of stress-denatured proteins, in association with DnaK and GrpE. It is the nucleotide exchange factor for DnaK and may function as a thermosensor. Unfolded proteins bind initially to DnaJ; upon interaction with the DnaJ-bound protein, DnaK hydrolyzes its bound ATP, resulting in the formation of a stable complex. GrpE releases ADP from DnaK; ATP binding to DnaK triggers the release of the substrate protein, thus completing the reaction cycle. Several rounds of ATP-dependent interactions between DnaJ, DnaK and GrpE are required for fully efficient folding. This Halorhodospira halophila (strain DSM 244 / SL1) (Ectothiorhodospira halophila (strain DSM 244 / SL1)) protein is Protein GrpE.